An 82-amino-acid polypeptide reads, in one-letter code: Cytochrome c-551 (82 aa).

Heme c contacts are provided by Cys-12, Cys-15, His-16, and Met-61.

Binds 1 heme c group covalently per subunit.

Its function is as follows. This is a prokaryotic monoheme cytochrome, unreactive with mitochondrial cytochrome C oxidase or reductase. It functions in nitrite and nitrate respiration in Pseudomonas, but it is also found in other bacteria. In Ectopseudomonas mendocina (Pseudomonas mendocina), this protein is Cytochrome c-551.